We begin with the raw amino-acid sequence, 262 residues long: Indole-3-glycerol phosphate synthase (262 aa).

It belongs to the TrpC family.

The enzyme catalyses 1-(2-carboxyphenylamino)-1-deoxy-D-ribulose 5-phosphate + H(+) = (1S,2R)-1-C-(indol-3-yl)glycerol 3-phosphate + CO2 + H2O. The protein operates within amino-acid biosynthesis; L-tryptophan biosynthesis; L-tryptophan from chorismate: step 4/5. The chain is Indole-3-glycerol phosphate synthase from Aromatoleum aromaticum (strain DSM 19018 / LMG 30748 / EbN1) (Azoarcus sp. (strain EbN1)).